The primary structure comprises 342 residues: Phosphate acyltransferase (342 aa).

It belongs to the PlsX family. In terms of assembly, homodimer. Probably interacts with PlsY.

The protein localises to the cytoplasm. It carries out the reaction a fatty acyl-[ACP] + phosphate = an acyl phosphate + holo-[ACP]. The protein operates within lipid metabolism; phospholipid metabolism. In terms of biological role, catalyzes the reversible formation of acyl-phosphate (acyl-PO(4)) from acyl-[acyl-carrier-protein] (acyl-ACP). This enzyme utilizes acyl-ACP as fatty acyl donor, but not acyl-CoA. This Alkalilimnicola ehrlichii (strain ATCC BAA-1101 / DSM 17681 / MLHE-1) protein is Phosphate acyltransferase.